We begin with the raw amino-acid sequence, 138 residues long: Ribosome maturation factor RimP (138 aa).

Belongs to the RimP family.

The protein localises to the cytoplasm. Required for maturation of 30S ribosomal subunits. This chain is Ribosome maturation factor RimP, found in Campylobacter curvus (strain 525.92).